The sequence spans 447 residues: Putative branched-chain amino acid carrier protein SH1502 (447 aa).

Helical transmembrane passes span 6–26 (WIVG…IFPP), 40–60 (VIAF…VGAL), 74–94 (PKFS…LFAI), 116–136 (LVLF…CINP), 143–163 (IGSL…IKGF), 193–213 (GYLT…VNAI), 229–249 (VMSG…LGFI), 270–287 (VGAY…GVFG), 290–310 (LLGI…IVSV), 328–348 (IFFT…VISM), 350–370 (VPVL…ILLA), 382–402 (IPIA…NGWV), and 417–437 (LEWF…AKFV).

It belongs to the branched chain amino acid transporter family.

It is found in the cell membrane. Its function is as follows. Component of the transport system for branched-chain amino acids (leucine, isoleucine and valine), which is coupled to a proton motive force. The protein is Putative branched-chain amino acid carrier protein SH1502 of Staphylococcus haemolyticus (strain JCSC1435).